Here is a 244-residue protein sequence, read N- to C-terminus: MFELTGRKALVTGASGAIGGAIARVLHAQGAIVGLHGTQMKNWRHWQLSLETGSSCSRLIWPIETKSRRLVRERKPILKASTSWSTNAGITKDGLFLHMADPDWDIVLEVNLTAMFRLTREITQQMIRRRNGRIINVTSVAGAIGNPGQTNYCASKAGMIGFSKSWRRRSTRNITVNCVAPGFIESAMTDKLNHKQKEKIMVAIPIHRMGTGTEVASAVAYLASDHAAYVTGQTIHVNGGMAMI.

11–35 (VTGASGAIGGAIARVLHAQGAIVGL) contributes to the NAD(+) binding site. Position 139 (Ser139) interacts with substrate. The active-site Proton acceptor is the Tyr152.

Belongs to the short-chain dehydrogenases/reductases (SDR) family.

Proposed to modify Nod factor fatty acyl chain. This chain is Nodulation protein G (nodG), found in Rhizobium meliloti (Ensifer meliloti).